Consider the following 156-residue polypeptide: Small ribosomal subunit protein uS7 (156 aa).

It belongs to the universal ribosomal protein uS7 family. As to quaternary structure, part of the 30S ribosomal subunit. Contacts proteins S9 and S11.

Its function is as follows. One of the primary rRNA binding proteins, it binds directly to 16S rRNA where it nucleates assembly of the head domain of the 30S subunit. Is located at the subunit interface close to the decoding center, probably blocks exit of the E-site tRNA. In Beijerinckia indica subsp. indica (strain ATCC 9039 / DSM 1715 / NCIMB 8712), this protein is Small ribosomal subunit protein uS7.